The sequence spans 325 residues: Diaminopimelate epimerase (325 aa).

Substrate contacts are provided by asparagine 11 and asparagine 69. Cysteine 78 (proton donor) is an active-site residue. Substrate is bound by residues 79 to 80 (GN), asparagine 166, asparagine 203, and 221 to 222 (ER). The active-site Proton acceptor is cysteine 230. 231–232 (GT) lines the substrate pocket.

This sequence belongs to the diaminopimelate epimerase family. As to quaternary structure, homodimer.

Its subcellular location is the cytoplasm. The catalysed reaction is (2S,6S)-2,6-diaminopimelate = meso-2,6-diaminopimelate. It functions in the pathway amino-acid biosynthesis; L-lysine biosynthesis via DAP pathway; DL-2,6-diaminopimelate from LL-2,6-diaminopimelate: step 1/1. Its function is as follows. Catalyzes the stereoinversion of LL-2,6-diaminopimelate (L,L-DAP) to meso-diaminopimelate (meso-DAP), a precursor of L-lysine and an essential component of the bacterial peptidoglycan. The chain is Diaminopimelate epimerase from Ligilactobacillus salivarius (strain UCC118) (Lactobacillus salivarius).